The primary structure comprises 986 residues: MAPLKVHGPVRMRSMQTGITKWKEGSFEIVEKDNKVSLVVHYNVGGIPKTFQLSHNIKSVTLRPNGRKLCCLMLTLKDTSFLTIDKVPLKDANEMRMYLDAVHQDRVHTAGKPSQGSGSFGGVLGSRTTQKEANRQFSYIENQAPPKRVTVESKDETPFRKVLGTPARASVKNSSGTGAPSNRVNVAASPTSSVPHRTGLLESRSEKRKRAQPPSSEMSEDYPKENDSSTNNTAMSDPAWKYLNSSREKQLKLKQEEENRTSGVLPLQSSSYYGSRSSSKEYSTSSSTLDRSSVSSQTTSAKRSLGFLSQPAPLSVKKMRSNQDYTGWNKPRVPLSTHPQQQLQGFSNLGNTCYMNAILQSLFSIQSFANDLLKQGIPWKKIPLNALIRRFAHLLAKKDVSSPEVKKELLKKVKSAISATAERFSGYMQNDAHEFLSQCLDQLKEDMEKLNKTWKSEPVPNDDSSPGRASDDLSATKVYTCPVISNLEFEVQHSIICKTCGETVTKREQFNDLSIDLPRRKKLFPSRSIQDSLDLFFRAEEIEYSCEKCNGKSAVVTHKFNRLPRVLILHLKRYSFNVALSLNHKVGQQVVIPRYLTLLSHCTESTRLPLTLGWSAHSAISRPLKASQMVNSCTISTSTPCRKGRFLRKEGLSELRSSTGRKNLNRVHVFKEDVQDINSSLQVQRGIRKSSKRSKMEGDKPELGNAGFDGMSEDELLAAVLEISKREASLSLSHDEDKPTSSPDTGFGDDEIQELPENLETMETEKPKAPLESGPANFTEITKDFDENKENKTPEGSQGEVDWLQQYDMEREREEQELQQALAQSLQEQEAREQKEDDDLKRATELSLQEFNSSLLDSVGSDEDSGNEDVLDMEYSEAEAEELKRNAETGELPHSYRLISIVSHIGSTSSSGHYISDVYDIKKQSWFTYNDLEVSRTLETTVQCDRDRSGYIFFYMHKDIFDELLETEKNAQPLSMEVGRSIRQPL.

Positions 32-34 (KDN) match the KEN box 1 motif. Short sequence motifs (D-box) lie at residues 71-79 (CLMLTLKDT) and 96-105 (RMYLDAVHQD). 2 disordered regions span residues 134 to 238 (NRQF…MSDP) and 251 to 305 (LKLK…KRSL). The span at 149-159 (VTVESKDETPF) shows a compositional bias: basic and acidic residues. A D-box 3 motif is present at residues 160–168 (RKVLGTPAR). Polar residues predominate over residues 171–195 (VKNSSGTGAPSNRVNVAASPTSSVP). Positions 224 to 226 (KEN) match the KEN box 2 motif. The segment covering 251-260 (LKLKQEEENR) has biased composition (basic and acidic residues). Low complexity predominate over residues 269-298 (SSSYYGSRSSSKEYSTSSSTLDRSSVSSQT). Positions 344-958 (QGFSNLGNTC…SGYIFFYMHK (615 aa)) constitute a USP domain. Cys353 (nucleophile) is an active-site residue. 2 disordered regions span residues 683–710 (VQRG…GFDG) and 729–751 (SLSL…GDDE). Residues 712–731 (SEDELLAAVLEISKREASLS) enclose the UIM 1 domain. Basic and acidic residues predominate over residues 729 to 739 (SLSLSHDEDKP). The short motif at 789–791 (KEN) is the KEN box 3 element. Positions 811-840 (REREEQELQQALAQSLQEQEAREQKEDDDL) are disordered. 2 UIM domains span residues 813–832 (REEQ…QEAR) and 835–854 (KEDD…FNSS). Residues 818–828 (LQQALAQSLQE) are compositionally biased toward low complexity. Basic and acidic residues predominate over residues 829–840 (QEAREQKEDDDL). Catalysis depends on His913, which acts as the Proton acceptor.

The protein belongs to the peptidase C19 family.

The enzyme catalyses Thiol-dependent hydrolysis of ester, thioester, amide, peptide and isopeptide bonds formed by the C-terminal Gly of ubiquitin (a 76-residue protein attached to proteins as an intracellular targeting signal).. Its function is as follows. Deubiquitinase that antagonizes the anaphase-promoting complex (APC/C) during G1/S transition by mediating deubiquitination of APC/C target proteins, thereby promoting S phase entry. Specifically mediates deubiquitination of 'Lys-11'-linked polyubiquitin chains, a specific ubiquitin-linkage type mediated by the APC/C complex. This Gallus gallus (Chicken) protein is Ubiquitin carboxyl-terminal hydrolase 37 (USP37).